The following is a 949-amino-acid chain: Translation initiation factor IF-2 (949 aa).

Disordered regions lie at residues 54–183, 217–288, and 305–357; these read FLKP…EAAP, LPAA…EVAL, and EVVA…EMQA. Basic and acidic residues-rich tracts occupy residues 67–92 and 101–164; these read DQEK…ERHI and IEAK…EEAA. 2 stretches are compositionally biased toward low complexity: residues 165-183 and 217-228; these read RAAA…EAAP and LPAAAPAAPSAP. Composition is skewed to basic and acidic residues over residues 235–288 and 330–339; these read PVEE…EVAL and KYQDNEDRLQ. A tr-type G domain is found at 445–619; that stretch reads TRPPVITVMG…EMLNLQSNPT (175 aa). Positions 454-461 are G1; the sequence is GHVDHGKT. 454–461 provides a ligand contact to GTP; it reads GHVDHGKT. The segment at 479–483 is G2; sequence GITQH. The tract at residues 501 to 504 is G3; it reads DTPG. GTP is bound by residues 501-505 and 555-558; these read DTPGH and NKID. A G4 region spans residues 555–558; the sequence is NKID. A G5 region spans residues 591 to 593; it reads SAK.

This sequence belongs to the TRAFAC class translation factor GTPase superfamily. Classic translation factor GTPase family. IF-2 subfamily.

Its subcellular location is the cytoplasm. Functionally, one of the essential components for the initiation of protein synthesis. Protects formylmethionyl-tRNA from spontaneous hydrolysis and promotes its binding to the 30S ribosomal subunits. Also involved in the hydrolysis of GTP during the formation of the 70S ribosomal complex. The sequence is that of Translation initiation factor IF-2 from Magnetococcus marinus (strain ATCC BAA-1437 / JCM 17883 / MC-1).